Reading from the N-terminus, the 320-residue chain is Cytochrome f (320 aa).

The N-terminal stretch at 1–35 (MQMRNTFSWIKEEIIRFIAVSLIIYIITRAPISNA) is a signal peptide. Positions 36, 56, 59, and 60 each coordinate heme. The chain crosses the membrane as a helical span at residues 286 to 306 (VQGLLLFLASIILAQIFLVLK).

This sequence belongs to the cytochrome f family. As to quaternary structure, the 4 large subunits of the cytochrome b6-f complex are cytochrome b6, subunit IV (17 kDa polypeptide, petD), cytochrome f and the Rieske protein, while the 4 small subunits are PetG, PetL, PetM and PetN. The complex functions as a dimer. Requires heme as cofactor.

Its subcellular location is the plastid. The protein localises to the chloroplast thylakoid membrane. In terms of biological role, component of the cytochrome b6-f complex, which mediates electron transfer between photosystem II (PSII) and photosystem I (PSI), cyclic electron flow around PSI, and state transitions. This is Cytochrome f from Morus indica (Mulberry).